A 341-amino-acid polypeptide reads, in one-letter code: uncharacterized protein (341 aa).

The protein belongs to the cycloisomerase 2 family.

This is an uncharacterized protein from Lactococcus lactis subsp. lactis (strain IL1403) (Streptococcus lactis).